The primary structure comprises 99 residues: U1-theraphotoxin-Lsp1b (99 aa).

The N-terminal stretch at 1–23 (MRSLTLAALLLCSLLLVFHTSAA) is a signal peptide. A propeptide spanning residues 24–50 (EELQAQEGHLMIPGDTDTALETVDDER) is cleaved from the precursor. Intrachain disulfides connect C54-C67, C58-C91, C72-C74, and C85-C96.

This sequence belongs to the neurotoxin 12 (Hwtx-2) family. 04 (lasiotoxin) subfamily. In terms of tissue distribution, expressed by the venom gland.

The protein localises to the secreted. In terms of biological role, toxin that causes irreversible contractile paralysis into adult Aedes aegypti resulting in 100% mortality after 24 hours. This chain is U1-theraphotoxin-Lsp1b, found in Lasiodora sp. (strain IBSP 8539) (Brazilian salmon pink birdeater).